The sequence spans 1460 residues: Ankyrin repeat-containing protein kinase A (1460 aa).

Disordered regions lie at residues 1–32 (MSIK…NINI), 57–181 (IKQQ…HKSH), 216–259 (RENE…ASST), 272–311 (STSN…VEFD), 329–354 (SSPS…TSTS), 374–510 (FTPS…SSNP), and 551–608 (CPSA…SSIP). Low complexity-rich tracts occupy residues 8–32 (SNIN…NINI), 61–86 (SNNN…PTSH), and 111–128 (SSGS…NNNN). Over residues 129-140 (QIKTSNGMNKPN) the composition is skewed to polar residues. Over residues 149–162 (KPRENSQNKIDDNK) the composition is skewed to basic and acidic residues. Composition is skewed to low complexity over residues 220 to 259 (NNNN…ASST) and 272 to 300 (STSN…RSTS). Polar residues-rich tracts occupy residues 329–345 (SSPS…VHMP) and 384–404 (PTNS…TIQP). The span at 405–422 (SSLDSSSESVSDGLQSVS) shows a compositional bias: low complexity. The segment covering 423 to 434 (GSPVTASPSPTI) has biased composition (polar residues). Low complexity predominate over residues 435–461 (SNNTNATTTNNNNNTNTNNNNNNNNNQ). Residues 462-472 (HNHHHHQHSHS) show a composition bias toward basic residues. Positions 467–667 (HQHSHSQQHD…IFRGCGIPLD (201 aa)) are interaction with 14-3-3 protein. Low complexity predominate over residues 486 to 497 (PSSPTSPTLLPS). The segment at 499-551 (THDFSSEYSSNPGGKCAICRKPLWSFPISDKSRRCRDCSLVVHRACVPLATEC) adopts a Phorbol-ester/DAG-type zinc-finger fold. Residues 559–568 (SKLSVPNGNQ) show a composition bias toward polar residues. Low complexity predominate over residues 569-608 (SNSSSSSSSSSSSSSSSNSSSSNTKGHSRTPSSPSVSSIP). In terms of domain architecture, GRAM spans 653-724 (RDFHFIFRGC…SNIASIEKRS (72 aa)). ANK repeat units follow at residues 814–843 (SKEI…QVNS), 852–883 (KGYT…RVRE), 887–920 (DGNT…NINE), 924–955 (NGET…NVNI), and 959–988 (AGES…DPTI). Positions 1112-1375 (LEYTEKIGSG…ATEAMTALAV (264 aa)) constitute a Protein kinase domain. Residues 1118–1126 (IGSGASGKV) and Lys-1139 each bind ATP. Asp-1231 serves as the catalytic Proton acceptor. The chain crosses the membrane as a helical span at residues 1293–1313 (MGIVMWEIVYCVVYGCYMIPY). A coiled-coil region spans residues 1425 to 1460 (PEEEQIYQEAMEKQRRNQEASANRNQKNKELLNNNN). The interval 1434–1460 (AMEKQRRNQEASANRNQKNKELLNNNN) is disordered.

It belongs to the protein kinase superfamily. TKL Ser/Thr protein kinase family.

The protein localises to the cytoplasm. The protein resides in the cytoskeleton. It is found in the membrane. Its subcellular location is the nucleus. It carries out the reaction L-seryl-[protein] + ATP = O-phospho-L-seryl-[protein] + ADP + H(+). The enzyme catalyses L-threonyl-[protein] + ATP = O-phospho-L-threonyl-[protein] + ADP + H(+). In terms of biological role, involved in the development of the fruiting body. Overexpression phenocopies the spnA null phenotype. This is Ankyrin repeat-containing protein kinase A (arkA) from Dictyostelium discoideum (Social amoeba).